A 305-amino-acid chain; its full sequence is Sulfate adenylyltransferase subunit 2 (305 aa).

Belongs to the PAPS reductase family. CysD subfamily. In terms of assembly, heterodimer composed of CysD, the smaller subunit, and CysN.

It carries out the reaction sulfate + ATP + H(+) = adenosine 5'-phosphosulfate + diphosphate. It functions in the pathway sulfur metabolism; hydrogen sulfide biosynthesis; sulfite from sulfate: step 1/3. Functionally, with CysN forms the ATP sulfurylase (ATPS) that catalyzes the adenylation of sulfate producing adenosine 5'-phosphosulfate (APS) and diphosphate, the first enzymatic step in sulfur assimilation pathway. APS synthesis involves the formation of a high-energy phosphoric-sulfuric acid anhydride bond driven by GTP hydrolysis by CysN coupled to ATP hydrolysis by CysD. This Myxococcus xanthus (strain DK1622) protein is Sulfate adenylyltransferase subunit 2.